The primary structure comprises 4763 residues: Nonribosomal peptide synthetase sidC (4763 aa).

The tract at residues 1-24 (MAGTANPADEGLTGPTETTNHINS) is disordered. Residues 15–24 (PTETTNHINS) are compositionally biased toward polar residues. The interval 296–815 (STVAEHSTLT…SSGKVDRNSI (520 aa)) is adenylation 1. Residues 853-930 (EKALELRTLV…GLLTLILNGK (78 aa)) enclose the Carrier 1 domain. S890 carries the post-translational modification O-(pantetheine 4'-phosphoryl)serine. The segment at 1003–1396 (TRSYIYHSVI…DIIAFILQNP (394 aa)) is condensation 1. The adenylation 2 stretch occupies residues 1398–1951 (GDFENALLYT…AKTDRRALQA (554 aa)). Positions 1979–2055 (LVASDAMEKI…DLARLCTSSS (77 aa)) constitute a Carrier 2 domain. O-(pantetheine 4'-phosphoryl)serine is present on S2016. Residues 2092-2423 (TPIQESLLSE…HIHAREVRRM (332 aa)) are condensation 2. Positions 2556-3070 (ELNAREHPEW…MSGKANIKEL (515 aa)) are adenylation 3. The region spanning 3099-3175 (RPLSSDEEAV…QLAQLPRKST (77 aa)) is the Carrier 3 domain. At S3136 the chain carries O-(pantetheine 4'-phosphoryl)serine. Residues 3217–3626 (PLQEGLVARS…DDIALDSFSL (410 aa)) form a condensation 3 region. Positions 3647 to 3720 (SATETKIRDL…ALAEHVDERS (74 aa)) constitute a Carrier 4 domain. An O-(pantetheine 4'-phosphoryl)serine modification is found at S3681. The segment at 3761-4093 (TPLQAGMITR…SLFDTLFVFQ (333 aa)) is condensation 4. A Carrier 5 domain is found at 4204-4277 (PAHESIIRDV…GISARIISPV (74 aa)). At S4238 the chain carries O-(pantetheine 4'-phosphoryl)serine. The condensation 5 stretch occupies residues 4344 to 4593 (ERIDSGKLEE…PCLNVTPFTF (250 aa)).

Belongs to the NRP synthetase family.

It participates in siderophore biosynthesis. In terms of biological role, nonribosomal peptide synthase; part of the siderophore biosynthetic pathway. Aspergillus fumigatus produces four types of siderophores, low-molecular-mass iron chelators, including excreted fusarinine C (FsC) and triacetylfusarinine C (TAFC) for iron uptake; and intacellular ferricrocin (FC) for hyphal and hydroxyferricrocin (HFC) for conidial iron distribution and storage. TAFC consists of three N(2)-acetyl-N(5)-anhydromevalonyl-N(5)-hydroxyornithine residues cyclically linked by ester bonds; FC is a cyclic hexapeptide with the structure Gly-Ser-Gly-(N(5)-acetyl-N(5)-hydroxyornithine)x3. The biosynthesis of all four siderophores depends on the hydroxylation of ornithine, catalyzed by the monooxygenase sidA. Subsequently, the pathways for biosynthesis of extra- and intracellular siderophores split. For biosynthesis of extracellular siderophores, the transacylase sidF transfers anhydromevalonyl to N(5)-hydroxyornithine. The required anhydromevalonyl-CoA moiety is derived from mevalonate by CoA ligation and dehydration catalyzed by sidI and sidH respectively. The acetylation of N(5)-hydroxyornithine for FC biosynthesis involves the constitutively expressed sidL. FC is hydroxylated to HFC by an as yet uncharacterized enzyme during conidiation. Assembly of fusarinine C (FsC) and FC is catalyzed by two different nonribosomal peptide synthetases (NRPS), sidD and sidC respectively. Subsequently, sidG catalyzes N2-acetylation of FsC for forming TAFC. Both extra- and intracellular siderophores are crucial for growth during iron limitation and virulence. In Aspergillus fumigatus (strain ATCC MYA-4609 / CBS 101355 / FGSC A1100 / Af293) (Neosartorya fumigata), this protein is Nonribosomal peptide synthetase sidC.